Reading from the N-terminus, the 213-residue chain is Large ribosomal subunit protein uL1 (213 aa).

Belongs to the universal ribosomal protein uL1 family. As to quaternary structure, part of the 50S ribosomal subunit.

Binds directly to 23S rRNA. Probably involved in E site tRNA release. Functionally, protein L1 is also a translational repressor protein, it controls the translation of its operon by binding to its mRNA. The protein is Large ribosomal subunit protein uL1 of Methanococcoides burtonii (strain DSM 6242 / NBRC 107633 / OCM 468 / ACE-M).